The primary structure comprises 621 residues: Protein Rep78 (621 aa).

The 199-residue stretch at 1–199 (MPGFYEIVIK…AQHLTHVSQT (199 aa)) folds into the PV NS1-Nuc domain. A divalent metal cation-binding residues include Glu-83, His-90, and His-92. Residues 90–92 (HMH) carry the RCR-2 motif. Catalysis depends on Tyr-156, which acts as the For nuclease activity. An RCR-3 motif is present at residues 156–160 (YLLPK). Polar residues predominate over residues 196–211 (VSQTQEQNKENQNPNS). A disordered region spans residues 196 to 216 (VSQTQEQNKENQNPNSDAPVI). The SF3 helicase domain occupies 308 to 463 (DPQYAASVFL…LDHDFGKVTK (156 aa)). 334–341 (GPATTGKT) contributes to the ATP binding site. The interval 489 to 520 (GGAKKRPAPSDADISEPKRVRESVAQPSTSDA) is disordered.

As to quaternary structure, hexamer when associated with the viral DNA ori sequence. Interacts with host PRKX. Interacts with host TOPORS. Interacts with host TBP and SUB1/PC4; these interactions play important roles in transcriptional regulation. The cofactor is a divalent metal cation.

It localises to the host nucleus. Its function is as follows. Plays an essential role in the initiation of viral DNA synthesis. Binds specifically to an inverted terminal repeat element (ITR) on the 3' and 5' ends of the viral DNA, where it cleaves a site specifically to generate a priming site for initiation of the synthesis of a complementary strand. Also plays a role as transcriptional regulator, DNA helicase and as key factors in site-specific integration of the viral genome. Regulates host PKA activity by interacting with host PRKX as a mechanism of interfering with helper virus propagation and promoting its own replication. Inhibits the host cell cycle G1/S, S and G2/M transitions. These arrests may provide essential cellular factors for viral DNA replication. This Adeno-associated virus 2 (isolate Srivastava/1982) (AAV-2) protein is Protein Rep78 (Rep78).